Consider the following 319-residue polypeptide: Taste receptor type 2 member 39 (319 aa).

The Extracellular portion of the chain corresponds to 1-16; sequence MAQPSNYWKQDLLPLS. A helical membrane pass occupies residues 17 to 37; sequence ILILTLVATECTIGIIASGII. The Cytoplasmic segment spans residues 38–56; the sequence is TVVNAVSWVQKRAVSITTR. Residues 57-77 form a helical membrane-spanning segment; that stretch reads ILLLLSVSRIGLQSIILIEMT. At 78–97 the chain is on the extracellular side; that stretch reads SSIFNFSSYNSVLYRVSRVS. N-linked (GlcNAc...) asparagine glycosylation occurs at Asn82. Residues 98 to 118 form a helical membrane-spanning segment; that stretch reads FVFLNYCSLWFAALLSFFHFV. The Cytoplasmic portion of the chain corresponds to 119 to 137; that stretch reads KIANFSYPLFFKLKWRISE. Residues 138–158 form a helical membrane-spanning segment; the sequence is LMPWLLWLSVFISFSSSMFFC. The Extracellular segment spans residues 159–187; sequence NHKYTVYNNISLSSNICNFTMELYVAEAN. N-linked (GlcNAc...) asparagine glycosylation is found at Asn167 and Asn176. The helical transmembrane segment at 188–208 threads the bilayer; the sequence is VVNVAFLFSFGILPPLTMFIA. Over 209–247 the chain is Cytoplasmic; that stretch reads TATLLIFSLRRHTLHMRNGDADSRNPRVEAHKQAIKETS. The helical transmembrane segment at 248–268 threads the bilayer; the sequence is CFLFLYILYAAVLFLSTSNIA. Residues 269 to 273 lie on the Extracellular side of the membrane; that stretch reads DASLF. Residues 274–294 form a helical membrane-spanning segment; the sequence is WSSVLRISLPVYPAGHSVLLI. Residues 295-319 lie on the Cytoplasmic side of the membrane; the sequence is QSNPGLKRTWKQLLSQIHLHLQSRY.

This sequence belongs to the G-protein coupled receptor T2R family.

The protein localises to the membrane. In terms of biological role, putative taste receptor which may play a role in the perception of bitterness. The polypeptide is Taste receptor type 2 member 39 (Rattus norvegicus (Rat)).